Reading from the N-terminus, the 383-residue chain is ATP phosphoribosyltransferase regulatory subunit (383 aa).

Belongs to the class-II aminoacyl-tRNA synthetase family. HisZ subfamily. As to quaternary structure, heteromultimer composed of HisG and HisZ subunits.

It is found in the cytoplasm. Its pathway is amino-acid biosynthesis; L-histidine biosynthesis; L-histidine from 5-phospho-alpha-D-ribose 1-diphosphate: step 1/9. Required for the first step of histidine biosynthesis. May allow the feedback regulation of ATP phosphoribosyltransferase activity by histidine. In Desulfitobacterium hafniense (strain Y51), this protein is ATP phosphoribosyltransferase regulatory subunit.